The primary structure comprises 134 residues: ATP synthase epsilon chain (134 aa).

This sequence belongs to the ATPase epsilon chain family. F-type ATPases have 2 components, CF(1) - the catalytic core - and CF(0) - the membrane proton channel. CF(1) has five subunits: alpha(3), beta(3), gamma(1), delta(1), epsilon(1). CF(0) has three main subunits: a, b and c.

The protein localises to the cell membrane. Its function is as follows. Produces ATP from ADP in the presence of a proton gradient across the membrane. In Clostridium botulinum (strain Eklund 17B / Type B), this protein is ATP synthase epsilon chain.